A 623-amino-acid polypeptide reads, in one-letter code: Pyranose 2-oxidase (623 aa).

An N-terminal signal peptide occupies residues 1–28 (MSTSSSDPFFNFAKSSFRSAAAQKASAS). A propeptide spanning residues 29–38 (SLPPLPGPDK) is cleaved from the precursor. His-167 is modified (tele-8alpha-FAD histidine). Gln-448 and His-450 together coordinate substrate. His-548 acts as the Proton acceptor in catalysis. Asn-593 is a catalytic residue.

It belongs to the GMC oxidoreductase family. In terms of assembly, homotetramer. FAD is required as a cofactor.

Its subcellular location is the periplasm. It carries out the reaction D-glucose + O2 = 2-dehydro-D-glucose + H2O2. In terms of biological role, catalyzes the oxidation of various aldopyranoses and disaccharides on carbon-2 to the corresponding 2-keto sugars concomitant with the reduction of O(2) to H(2)O(2). Plays an important role in lignin degradation of wood rot fungi by supplying the essential cosubstrate H(2)O(2) for the ligninolytic peroxidases, lignin peroxidase and manganese-dependent peroxidase. This Peniophora sp. (strain SG) (White-rot fungus) protein is Pyranose 2-oxidase (p2ox).